Consider the following 65-residue polypeptide: Diapause-specific peptide (65 aa).

Residues 1-24 (MGAALKMTIFLLIVACAMIATTEA) form the signal peptide. Cystine bridges form between Cys31-Cys45, Cys35-Cys57, and Cys46-Cys64.

In terms of tissue distribution, highly expressed in the fat body.

Its subcellular location is the secreted. Has antifungal activity against T.rubrum. Blocks voltage-dependent N-type calcium channels (Cav2.2 / CACNA1B). The protein is Diapause-specific peptide of Gastrophysa atrocyanea (Leaf beetle).